The sequence spans 471 residues: Siroheme synthase 1 (471 aa).

A precorrin-2 dehydrogenase /sirohydrochlorin ferrochelatase region spans residues 1-203 (MDYLPLFAEL…GNSAEAEKAL (203 aa)). NAD(+) contacts are provided by residues 22 to 23 (EI) and 43 to 44 (ET). Ser128 bears the Phosphoserine mark. The segment at 215-471 (GEIILVGAGP…GFNASVVNLA (257 aa)) is uroporphyrinogen-III C-methyltransferase. Pro224 lines the S-adenosyl-L-methionine pocket. Catalysis depends on Asp247, which acts as the Proton acceptor. Lys269 serves as the catalytic Proton donor. Residues 300 to 302 (GGD), Ile305, 330 to 331 (TA), Met382, and Gly411 each bind S-adenosyl-L-methionine.

In the N-terminal section; belongs to the precorrin-2 dehydrogenase / sirohydrochlorin ferrochelatase family. It in the C-terminal section; belongs to the precorrin methyltransferase family.

It catalyses the reaction uroporphyrinogen III + 2 S-adenosyl-L-methionine = precorrin-2 + 2 S-adenosyl-L-homocysteine + H(+). It carries out the reaction precorrin-2 + NAD(+) = sirohydrochlorin + NADH + 2 H(+). The enzyme catalyses siroheme + 2 H(+) = sirohydrochlorin + Fe(2+). The protein operates within cofactor biosynthesis; adenosylcobalamin biosynthesis; precorrin-2 from uroporphyrinogen III: step 1/1. It functions in the pathway cofactor biosynthesis; adenosylcobalamin biosynthesis; sirohydrochlorin from precorrin-2: step 1/1. Its pathway is porphyrin-containing compound metabolism; siroheme biosynthesis; precorrin-2 from uroporphyrinogen III: step 1/1. It participates in porphyrin-containing compound metabolism; siroheme biosynthesis; siroheme from sirohydrochlorin: step 1/1. The protein operates within porphyrin-containing compound metabolism; siroheme biosynthesis; sirohydrochlorin from precorrin-2: step 1/1. Multifunctional enzyme that catalyzes the SAM-dependent methylations of uroporphyrinogen III at position C-2 and C-7 to form precorrin-2 via precorrin-1. Then it catalyzes the NAD-dependent ring dehydrogenation of precorrin-2 to yield sirohydrochlorin. Finally, it catalyzes the ferrochelation of sirohydrochlorin to yield siroheme. This chain is Siroheme synthase 1, found in Klebsiella pneumoniae subsp. pneumoniae (strain ATCC 700721 / MGH 78578).